The primary structure comprises 262 residues: Pimeloyl-[acyl-carrier protein] methyl ester esterase (262 aa).

Positions 15–242 constitute an AB hydrolase-1 domain; it reads HLVLLHGWGL…AAHAPFISHP (228 aa). Residues tryptophan 22, 82 to 83, and 143 to 147 each bind substrate; these read SL and FLALQ. Serine 82 (nucleophile) is an active-site residue. Residues aspartate 207 and histidine 235 contribute to the active site. Histidine 235 contacts substrate.

Belongs to the AB hydrolase superfamily. Carboxylesterase BioH family. As to quaternary structure, monomer.

It localises to the cytoplasm. The catalysed reaction is 6-carboxyhexanoyl-[ACP] methyl ester + H2O = 6-carboxyhexanoyl-[ACP] + methanol + H(+). It participates in cofactor biosynthesis; biotin biosynthesis. In terms of biological role, the physiological role of BioH is to remove the methyl group introduced by BioC when the pimeloyl moiety is complete. It allows to synthesize pimeloyl-ACP via the fatty acid synthetic pathway through the hydrolysis of the ester bonds of pimeloyl-ACP esters. This Shigella flexneri protein is Pimeloyl-[acyl-carrier protein] methyl ester esterase.